Reading from the N-terminus, the 775-residue chain is E3 ubiquitin-protein ligase ICP0 (775 aa).

Residues 1–112 (MEPRPGASTR…PPREDGGSDE (112 aa)) are disordered. Composition is skewed to basic and acidic residues over residues 10-21 (RRPEGRPQREPA) and 45-57 (VGGR…HDDD). A compositionally biased stretch (acidic residues) spans 58–69 (SASEADSTDTEL). Threonine 67 is subject to Phosphothreonine; by host; by CK1. An RING-type zinc finger spans residues 116–157 (CAVCTDEIAPHLRCDTFPCMHRFCIPCMKTWMQLRNTCPLCN). Residues 221–636 (RALSPTHPEP…HAETSGAVPA (416 aa)) are disordered. Residues 231 to 243 (TTDEDDDDLDDAD) show a composition bias toward acidic residues. Residues 258–284 (RRGAAAPPVTGGASHAAPQPAAARTAP) show a composition bias toward low complexity. Residues 293 to 302 (GSSNTNTTTN) are compositionally biased toward polar residues. Residues 310 to 321 (RQSRAAAPRGAS) show a composition bias toward low complexity. Residues 322-331 (GPSGGVGVGV) are compositionally biased toward gly residues. Over residues 369-390 (PASPHRPPAAPMPGSAPRPGPP) the composition is skewed to pro residues. The span at 391–409 (ASAAASGPARPRAAVAPCV) shows a compositional bias: low complexity. Residues 410 to 421 (RAPPPGPGPRAP) are compositionally biased toward pro residues. Residues 422 to 431 (APGAEPAARP) show a composition bias toward low complexity. Residues 439–453 (QSHSSLAQAANQEQS) are compositionally biased toward polar residues. The span at 464–476 (GSGGPGVEGGHGP) shows a compositional bias: gly residues. Low complexity predominate over residues 477-493 (SRGAAPSGAAPLPSAAS). Polar residues predominate over residues 509–519 (GQENPSPQSTR). A compositionally biased stretch (gly residues) spans 539–549 (GPGGRGQGGPG). The span at 550 to 592 (TPLTSSAASASSSSASSSSAPTPAGAASSAAGAASSSASASSG) shows a compositional bias: low complexity. The span at 617–626 (GPRKCARKTR) shows a compositional bias: basic residues.

It belongs to the simplexviruses ICp0 family. In terms of assembly, interacts directly with human RCOR1/CoREST protein, leading to the disruption of the human BHC corepressor complex. Interacts with human CENPA, leading to its degradation. Interacts with human USP7; this interaction modulates ICP0 stability. Interacts with human CDC34. Interacts (when phosphorylated) with human RNF8 (via FHA domain). Interacts with human TRIM27. Interacts with human ZBP1. Interacts with host MORC3; this interaction promotes the degradation of host MORC3. In terms of processing, phosphorylated at Thr-67, leading to promote interaction with host RNF8. Phosphorylated by host CHEK2; leading to increased SUMO-targeted ubiquitin ligase activity of ICP0. Post-translationally, auto-ubiquitinated. Deubiquitinated by host USP7; leading to stabilize it.

It localises to the host cytoplasm. The protein resides in the host nucleus. It catalyses the reaction S-ubiquitinyl-[E2 ubiquitin-conjugating enzyme]-L-cysteine + [acceptor protein]-L-lysine = [E2 ubiquitin-conjugating enzyme]-L-cysteine + N(6)-ubiquitinyl-[acceptor protein]-L-lysine.. Its function is as follows. SUMO-targeted ubiquitin ligase that plays an essential role in nuclear antiviral defense evasion triggered by dsDNA viruses. Acts during the initial stages of lytic infection and the reactivation of latent viral genome. Prevents the antiviral effect of nuclear bodies by degrading host PML, SP100 and MORC3. Prevents antiviral response to viral DNA induced by IFI16 by degrading it. Additionally, inhibits host IRF3 nuclear signaling to prevent interferon production by the infected cells. Interestingly, the E3 ubiquitin ligase activity associated with the RING finger domain does not seem to be directly required to inhibit the activation of IRF3 but instead plays a critical role in modulating the cellular localization of ICP0. Upon reactivation of latent genome, suppresses the silencing of viral DNA by dissociating either HDAC1 or HDAC2 from the HDAC-RCOR1-REST-KDM1A complex localized at the ND10 structures and causes their dispersal. Two cellular histone ubiquitin ligases RNF8 and RNF168 are also targeted by ICP0 for degradation, leading to a loss of ubiquitinated forms of H2A, a relief of transcriptional repression, and the activation of latent viral genomes. Enhances the localization of host CCND3 to ND10 bodies that serve as precursors of replication compartments to enable efficient viral replication. Like many RING-finger E3 ubiquitin ligases, ICP0 can induce its own ubiquitination, an activity that promotes its instability due to its targeting to the 26S proteasome for degradation. ICP0 restricts this process by recruiting the cellular ubiquitin-specific protease USP7 that cleaves the anchored ubiquitin chains from ICP0, thereby promoting its stabilization. This is E3 ubiquitin-protein ligase ICP0 (ICP0) from Homo sapiens (Human).